Consider the following 348-residue polypeptide: Protein pelota homolog (348 aa).

This sequence belongs to the eukaryotic release factor 1 family. Pelota subfamily. As to quaternary structure, monomer. The cofactor is a divalent metal cation.

The protein localises to the cytoplasm. Its function is as follows. May function in recognizing stalled ribosomes, interact with stem-loop structures in stalled mRNA molecules, and effect endonucleolytic cleavage of the mRNA. May play a role in the release non-functional ribosomes and degradation of damaged mRNAs. Has endoribonuclease activity. The polypeptide is Protein pelota homolog (Methanococcus vannielii (strain ATCC 35089 / DSM 1224 / JCM 13029 / OCM 148 / SB)).